A 339-amino-acid chain; its full sequence is Ectoine/5-hydroxyectoine-binding periplasmic protein UehA (339 aa).

Residues 1–20 (MAQSITFTFGAVAAAGIALA) form the signal peptide. 5 residues coordinate L-ectoine: Glu-36, Arg-171, Asn-211, Phe-215, and Phe-236. Cys-162 and Cys-303 form a disulfide bridge.

This sequence belongs to the bacterial solute-binding protein 7 family. In terms of assembly, monomer. The complex comprises the extracytoplasmic solute receptor protein UehA, and the two transmembrane proteins UehB and UehC.

The protein localises to the periplasm. Part of the tripartite ATP-independent periplasmic (TRAP) transport system UehABC, which imports both ectoine and 5-hydroxyectoine as nutrients, and not as osmoprotectants. UehA binds both ectoine and 5-hydroxyectoine with high specificity and affinity. This chain is Ectoine/5-hydroxyectoine-binding periplasmic protein UehA, found in Ruegeria pomeroyi (strain ATCC 700808 / DSM 15171 / DSS-3) (Silicibacter pomeroyi).